A 140-amino-acid chain; its full sequence is UPF0132 membrane protein MJ1527 (140 aa).

A run of 3 helical transmembrane segments spans residues 40–60 (MEGV…LLLE), 70–90 (AMQS…VSAI), and 92–112 (IIGW…WIVG).

The protein belongs to the UPF0132 family.

It is found in the cell membrane. The protein is UPF0132 membrane protein MJ1527 of Methanocaldococcus jannaschii (strain ATCC 43067 / DSM 2661 / JAL-1 / JCM 10045 / NBRC 100440) (Methanococcus jannaschii).